A 162-amino-acid polypeptide reads, in one-letter code: NADH-quinone oxidoreductase subunit I (162 aa).

4Fe-4S ferredoxin-type domains follow at residues 53-83 (LRRY…IEAE) and 93-122 (TRYD…EGPN). Residues Cys-63, Cys-66, Cys-69, Cys-73, Cys-102, Cys-105, Cys-108, and Cys-112 each contribute to the [4Fe-4S] cluster site.

This sequence belongs to the complex I 23 kDa subunit family. As to quaternary structure, NDH-1 is composed of 14 different subunits. Subunits NuoA, H, J, K, L, M, N constitute the membrane sector of the complex. It depends on [4Fe-4S] cluster as a cofactor.

The protein resides in the cell inner membrane. It carries out the reaction a quinone + NADH + 5 H(+)(in) = a quinol + NAD(+) + 4 H(+)(out). NDH-1 shuttles electrons from NADH, via FMN and iron-sulfur (Fe-S) centers, to quinones in the respiratory chain. The immediate electron acceptor for the enzyme in this species is believed to be ubiquinone. Couples the redox reaction to proton translocation (for every two electrons transferred, four hydrogen ions are translocated across the cytoplasmic membrane), and thus conserves the redox energy in a proton gradient. This Rhodospirillum centenum (strain ATCC 51521 / SW) protein is NADH-quinone oxidoreductase subunit I.